The chain runs to 393 residues: Formate-dependent phosphoribosylglycinamide formyltransferase (393 aa).

N(1)-(5-phospho-beta-D-ribosyl)glycinamide-binding positions include 22 to 23 (EL) and Glu82. Residues Arg114, Lys155, 160 to 165 (SSGHGQ), 195 to 198 (EGFV), and Glu203 each bind ATP. Residues 119 to 308 (RLAAEELGLP…EFALHARAIL (190 aa)) form the ATP-grasp domain. Residues Glu267 and Glu279 each contribute to the Mg(2+) site. N(1)-(5-phospho-beta-D-ribosyl)glycinamide-binding positions include Asp286, Lys356, and 363 to 364 (RR).

The protein belongs to the PurK/PurT family. In terms of assembly, homodimer.

The catalysed reaction is N(1)-(5-phospho-beta-D-ribosyl)glycinamide + formate + ATP = N(2)-formyl-N(1)-(5-phospho-beta-D-ribosyl)glycinamide + ADP + phosphate + H(+). It participates in purine metabolism; IMP biosynthesis via de novo pathway; N(2)-formyl-N(1)-(5-phospho-D-ribosyl)glycinamide from N(1)-(5-phospho-D-ribosyl)glycinamide (formate route): step 1/1. Its function is as follows. Involved in the de novo purine biosynthesis. Catalyzes the transfer of formate to 5-phospho-ribosyl-glycinamide (GAR), producing 5-phospho-ribosyl-N-formylglycinamide (FGAR). Formate is provided by PurU via hydrolysis of 10-formyl-tetrahydrofolate. The polypeptide is Formate-dependent phosphoribosylglycinamide formyltransferase (Mannheimia succiniciproducens (strain KCTC 0769BP / MBEL55E)).